Here is a 485-residue protein sequence, read N- to C-terminus: Arginine/agmatine antiporter (485 aa).

12 helical membrane passes run 12-34 (GTIA…SLPQ), 38-60 (ATAG…FFIA), 89-111 (IGFT…YAVI), 126-148 (GGNT…FIVL), 155-177 (SIIN…ILTA), 211-230 (TMLV…VMSG), 243-265 (VLGF…GSLF), 291-313 (VLMN…IIVA), 363-385 (WNTM…AAFL), 400-422 (IKAP…LIYA), 427-446 (YLFM…IDAG), and 461-483 (IVGM…TGRI).

Belongs to the amino acid-polyamine-organocation (APC) superfamily. Basic amino acid/polyamine antiporter (APA) (TC 2.A.3.2) family.

It is found in the cell inner membrane. In terms of biological role, catalyzes the exchange of L-arginine for agmatine. The arginine uptake by the bacterium in the macrophage may be a virulence factor against the host innate immune response. The polypeptide is Arginine/agmatine antiporter (aaxC) (Chlamydia pneumoniae (Chlamydophila pneumoniae)).